The primary structure comprises 251 residues: Ubiquinone/menaquinone biosynthesis C-methyltransferase UbiE (251 aa).

Residues threonine 74, aspartate 95, 123–124 (NA), and serine 140 each bind S-adenosyl-L-methionine.

Belongs to the class I-like SAM-binding methyltransferase superfamily. MenG/UbiE family.

The catalysed reaction is a 2-demethylmenaquinol + S-adenosyl-L-methionine = a menaquinol + S-adenosyl-L-homocysteine + H(+). The enzyme catalyses a 2-methoxy-6-(all-trans-polyprenyl)benzene-1,4-diol + S-adenosyl-L-methionine = a 5-methoxy-2-methyl-3-(all-trans-polyprenyl)benzene-1,4-diol + S-adenosyl-L-homocysteine + H(+). It participates in quinol/quinone metabolism; menaquinone biosynthesis; menaquinol from 1,4-dihydroxy-2-naphthoate: step 2/2. The protein operates within cofactor biosynthesis; ubiquinone biosynthesis. Functionally, methyltransferase required for the conversion of demethylmenaquinol (DMKH2) to menaquinol (MKH2) and the conversion of 2-polyprenyl-6-methoxy-1,4-benzoquinol (DDMQH2) to 2-polyprenyl-3-methyl-6-methoxy-1,4-benzoquinol (DMQH2). The sequence is that of Ubiquinone/menaquinone biosynthesis C-methyltransferase UbiE from Salmonella paratyphi A (strain AKU_12601).